The chain runs to 214 residues: UPF0301 protein blr1492 (214 aa).

The interval 1-22 (MAPTGKRTGESTRSTGPAPPSS) is disordered.

It belongs to the UPF0301 (AlgH) family.

This is UPF0301 protein blr1492 from Bradyrhizobium diazoefficiens (strain JCM 10833 / BCRC 13528 / IAM 13628 / NBRC 14792 / USDA 110).